The following is a 556-amino-acid chain: MDRRTLTAIVLSFVLLTAFQFYMAWKYPPAELTGEQVQSGESSAPAPLASTAPVADALPPPVEGMAGSAPQQAMSQPLINTDAKSLLHFKNDLVEGSLSLQGGRLVGMDFLQHTDVLGGKPISFMGISQVESFYQESGFLPVAGSAIKAPDANTQWQLIGKESLQGAGEFKLVWDNGEGIVFEKLFSFAQGSYLFKVEDRLINNSAAALGVYHYSQFKRIPVINSQSMLAMSDFQGPMAYLNGERYQHSYEDLTAQDLREKGHGGWTGFSDKYFLAAMVAKPLPPEAQPRRYYFDYDRPNYRVGMVENSVIIPAGQSLAVDYDLFIGPKEISTLERSNLSLERSIDYGWFHFLAEPLVKVLNFFNSVVHNYGVAIILLTLAIKLLFFPLANKSYRSMNAMKKLQPKIEELKKLHGSDRNKMNEAMMKLYQTHKVNPLGGCLPILVQIPVFFALYKVLFLSVEMRHAPFMLWIPDLSAMDPFYVLPLLMGGSMFLQSKLNPTPSDPMQAKIMMFLPVIFTVMFLSFPSGLVLYWLVNNVLSISQQYYIMKKMEHEPS.

A helical transmembrane segment spans residues 5–25 (TLTAIVLSFVLLTAFQFYMAW). A disordered region spans residues 36–74 (QVQSGESSAPAPLASTAPVADALPPPVEGMAGSAPQQAM). Low complexity predominate over residues 42 to 55 (SSAPAPLASTAPVA). 4 helical membrane passes run 370–390 (NYGVAIILLTLAIKLLFFPLA), 441–461 (LPILVQIPVFFALYKVLFLSV), 468–488 (FMLWIPDLSAMDPFYVLPLLM), and 510–530 (IMMFLPVIFTVMFLSFPSGLV).

This sequence belongs to the OXA1/ALB3/YidC family. Type 1 subfamily. In terms of assembly, interacts with the Sec translocase complex via SecD. Specifically interacts with transmembrane segments of nascent integral membrane proteins during membrane integration.

The protein resides in the cell inner membrane. Its function is as follows. Required for the insertion and/or proper folding and/or complex formation of integral membrane proteins into the membrane. Involved in integration of membrane proteins that insert both dependently and independently of the Sec translocase complex, as well as at least some lipoproteins. Aids folding of multispanning membrane proteins. This chain is Membrane protein insertase YidC, found in Magnetococcus marinus (strain ATCC BAA-1437 / JCM 17883 / MC-1).